The chain runs to 122 residues: Small ribosomal subunit protein uS13 (122 aa).

The tract at residues 99–122 (RGQRTHTNARTRKGPAKAIAGKKK) is disordered.

It belongs to the universal ribosomal protein uS13 family. Part of the 30S ribosomal subunit. Forms a loose heterodimer with protein S19. Forms two bridges to the 50S subunit in the 70S ribosome.

Its function is as follows. Located at the top of the head of the 30S subunit, it contacts several helices of the 16S rRNA. In the 70S ribosome it contacts the 23S rRNA (bridge B1a) and protein L5 of the 50S subunit (bridge B1b), connecting the 2 subunits; these bridges are implicated in subunit movement. Contacts the tRNAs in the A and P-sites. This is Small ribosomal subunit protein uS13 from Sinorhizobium fredii (strain NBRC 101917 / NGR234).